We begin with the raw amino-acid sequence, 204 residues long: Large ribosomal subunit protein eL15 (204 aa).

The protein belongs to the eukaryotic ribosomal protein eL15 family.

In Anopheles gambiae (African malaria mosquito), this protein is Large ribosomal subunit protein eL15 (RpL15).